A 474-amino-acid chain; its full sequence is 4-aminobutyrate aminotransferase (474 aa).

Residues 1 to 13 (MSSTATVTESTHF) show a composition bias toward polar residues. The interval 1–31 (MSSTATVTESTHFFPNEPQGPSIKTETIPGP) is disordered. 142 to 143 (GS) contacts pyridoxal 5'-phosphate. R199 is a binding site for substrate. K333 carries the post-translational modification N6-(pyridoxal phosphate)lysine. T357 is a pyridoxal 5'-phosphate binding site.

The protein belongs to the class-III pyridoxal-phosphate-dependent aminotransferase family. Homodimer. Pyridoxal 5'-phosphate is required as a cofactor.

Its subcellular location is the cytoplasm. The enzyme catalyses 4-aminobutanoate + 2-oxoglutarate = succinate semialdehyde + L-glutamate. Functionally, required for the degradation of gamma-aminobutyric acid (GABA), which is important for utilization of GABA as nitrogen source. Deaminates GABA to succinate-semialdehyde, which in turn is converted to succinate by the succinate semialdehyde dehydrogenase. Cannot transaminate beta-alanine (BAL). The polypeptide is 4-aminobutyrate aminotransferase (uga1) (Schizosaccharomyces pombe (strain 972 / ATCC 24843) (Fission yeast)).